The chain runs to 702 residues: Phosphoglycerol transferase I (702 aa).

3 helical membrane passes run 3-25 (WILALSLLLLLLLLVASPRLAWL), 73-95 (GYIAVFIGMVLLSLSPLVLLRVR), and 102-124 (GGGAVFGAFVVMLLVSVAVSPLY).

The protein belongs to the OpgB family.

Its subcellular location is the cell inner membrane. It catalyses the reaction a phosphatidylglycerol + a membrane-derived-oligosaccharide D-glucose = a 1,2-diacyl-sn-glycerol + a membrane-derived-oligosaccharide 6-(glycerophospho)-D-glucose.. Its pathway is glycan metabolism; osmoregulated periplasmic glucan (OPG) biosynthesis. Its function is as follows. Transfers a phosphoglycerol residue from phosphatidylglycerol to the membrane-bound nascent glucan backbones. The protein is Phosphoglycerol transferase I of Xanthomonas campestris pv. campestris (strain ATCC 33913 / DSM 3586 / NCPPB 528 / LMG 568 / P 25).